The sequence spans 131 residues: Modulator protein MzrA (131 aa).

Topologically, residues 1–14 (MSIRWLFPKLTPRK) are cytoplasmic. The helical transmembrane segment at 15–31 (VARILILLALPIIALTQ) threads the bilayer. At 32–131 (SQSLRHSQDD…KLTQKQSKLG (100 aa)) the chain is on the periplasmic side.

It belongs to the MzrA family. In terms of assembly, interacts with EnvZ.

It localises to the cell inner membrane. Modulates the activity of the EnvZ/OmpR two-component regulatory system, probably by directly modulating EnvZ enzymatic activity and increasing stability of phosphorylated OmpR. This chain is Modulator protein MzrA, found in Pectobacterium carotovorum subsp. carotovorum (strain PC1).